The sequence spans 612 residues: Glutamine--fructose-6-phosphate aminotransferase [isomerizing] (612 aa).

Cys-2 serves as the catalytic Nucleophile; for GATase activity. The 219-residue stretch at 2–220 folds into the Glutamine amidotransferase type-2 domain; it reads CGIVGAIRAH…DGDIALLASD (219 aa). SIS domains are found at residues 288-428 and 461-602; these read AKSV…VRGL and WAQQ…VDKP. Lys-607 serves as the catalytic For Fru-6P isomerization activity.

Homodimer.

The protein localises to the cytoplasm. It carries out the reaction D-fructose 6-phosphate + L-glutamine = D-glucosamine 6-phosphate + L-glutamate. Catalyzes the first step in hexosamine metabolism, converting fructose-6P into glucosamine-6P using glutamine as a nitrogen source. This Neisseria meningitidis serogroup A / serotype 4A (strain DSM 15465 / Z2491) protein is Glutamine--fructose-6-phosphate aminotransferase [isomerizing].